Reading from the N-terminus, the 406-residue chain is Arginine deiminase (406 aa).

The Amidino-cysteine intermediate role is filled by Cys396.

The protein belongs to the arginine deiminase family.

It is found in the cytoplasm. It catalyses the reaction L-arginine + H2O = L-citrulline + NH4(+). It participates in amino-acid degradation; L-arginine degradation via ADI pathway; carbamoyl phosphate from L-arginine: step 1/2. The polypeptide is Arginine deiminase (Vibrio campbellii (strain ATCC BAA-1116)).